A 373-amino-acid polypeptide reads, in one-letter code: Meiosis-specific kinetochore protein (373 aa).

Disordered regions lie at residues 1–91 (MWPL…QDEK) and 250–276 (STPEKTKKKKTNSSTPGKKNRGLLTST). Residues 77 to 91 (SLQENRSSEDTQDEK) show a composition bias toward basic and acidic residues. Residues 275–277 (STP) carry the POLO box domain (PBD)-binding motif. The segment at 332-335 (EICC) is required for localization to kinetochores.

In terms of assembly, interacts with CENPC. Interacts with PLK1; required for recruitment of PLK1 at kinetochores.

It localises to the chromosome. The protein resides in the centromere. The protein localises to the kinetochore. Functionally, key regulator of kinetochore function during meiosis I: required both for mono-orientation of kinetochores on sister chromosomes and protection of centromeric cohesin from separase-mediated cleavage. Acts by facilitating kinetochore mono-orientation during meiosis I, when kinetochores on sister chromosomes face the same direction and are thus captured and pulled by spindle fibers from the same pole. Also required to prevent cleavage of cohesin at centromeres during meiosis I, possibly by acting as a regulator of the shugoshin-dependent protection pathway. Acts in collaboration with PLK1: required for PLK1 enrichment to kinetochores. Not required during meiosis II or mitosis. The polypeptide is Meiosis-specific kinetochore protein (Homo sapiens (Human)).